Here is a 73-residue protein sequence, read N- to C-terminus: UPF0235 protein LBL_1291 (73 aa).

The protein belongs to the UPF0235 family.

The protein is UPF0235 protein LBL_1291 of Leptospira borgpetersenii serovar Hardjo-bovis (strain L550).